Reading from the N-terminus, the 416-residue chain is Glutamyl-tRNA reductase (416 aa).

Substrate-binding positions include 49–52 (TCNR), serine 105, 110–112 (EPQ), and glutamine 116. Cysteine 50 serves as the catalytic Nucleophile. 185-190 (GAGETI) lines the NADP(+) pocket.

This sequence belongs to the glutamyl-tRNA reductase family. Homodimer.

The catalysed reaction is (S)-4-amino-5-oxopentanoate + tRNA(Glu) + NADP(+) = L-glutamyl-tRNA(Glu) + NADPH + H(+). The protein operates within porphyrin-containing compound metabolism; protoporphyrin-IX biosynthesis; 5-aminolevulinate from L-glutamyl-tRNA(Glu): step 1/2. In terms of biological role, catalyzes the NADPH-dependent reduction of glutamyl-tRNA(Glu) to glutamate 1-semialdehyde (GSA). The protein is Glutamyl-tRNA reductase of Shewanella baltica (strain OS223).